The chain runs to 597 residues: Elongation factor 4 (597 aa).

Residues 2–184 (KNIRNFSIIA…EIVAKIPAPT (183 aa)) enclose the tr-type G domain. GTP contacts are provided by residues 14–19 (DHGKST) and 131–134 (NKID).

It belongs to the TRAFAC class translation factor GTPase superfamily. Classic translation factor GTPase family. LepA subfamily.

The protein resides in the cell inner membrane. The catalysed reaction is GTP + H2O = GDP + phosphate + H(+). Functionally, required for accurate and efficient protein synthesis under certain stress conditions. May act as a fidelity factor of the translation reaction, by catalyzing a one-codon backward translocation of tRNAs on improperly translocated ribosomes. Back-translocation proceeds from a post-translocation (POST) complex to a pre-translocation (PRE) complex, thus giving elongation factor G a second chance to translocate the tRNAs correctly. Binds to ribosomes in a GTP-dependent manner. The polypeptide is Elongation factor 4 (Neisseria meningitidis serogroup C (strain 053442)).